A 146-amino-acid chain; its full sequence is Actin-depolymerizing factor 6 (146 aa).

Phosphoserine is present on Ser-13. Positions 14–146 (GMGVADESKT…DLEVLRERAN (133 aa)) constitute an ADF-H domain.

The protein belongs to the actin-binding proteins ADF family. Post-translationally, phosphorylated. Expressed in vascular tissues of all organs.

It is found in the cytoplasm. It localises to the cytoskeleton. Its function is as follows. Actin-depolymerizing protein. Severs actin filaments (F-actin) and binds to actin monomers. The sequence is that of Actin-depolymerizing factor 6 (ADF6) from Arabidopsis thaliana (Mouse-ear cress).